Here is an 855-residue protein sequence, read N- to C-terminus: DNA mismatch repair protein MutS (855 aa).

616-623 (GPNMGGKS) serves as a coordination point for ATP.

The protein belongs to the DNA mismatch repair MutS family.

Its function is as follows. This protein is involved in the repair of mismatches in DNA. It is possible that it carries out the mismatch recognition step. This protein has a weak ATPase activity. This Salmonella paratyphi A (strain ATCC 9150 / SARB42) protein is DNA mismatch repair protein MutS.